Consider the following 591-residue polypeptide: L-fucose isomerase (591 aa).

Active-site proton acceptor residues include Glu-337 and Asp-361. Mn(2+) is bound by residues Glu-337, Asp-361, and His-528.

Belongs to the L-fucose isomerase family. In terms of assembly, homohexamer. The cofactor is Mn(2+).

It is found in the cytoplasm. The enzyme catalyses L-fucose = L-fuculose. It functions in the pathway carbohydrate degradation; L-fucose degradation; L-lactaldehyde and glycerone phosphate from L-fucose: step 1/3. Its function is as follows. Converts the aldose L-fucose into the corresponding ketose L-fuculose. The chain is L-fucose isomerase from Salmonella choleraesuis (strain SC-B67).